A 320-amino-acid polypeptide reads, in one-letter code: mRNA decay activator protein ZFP36 (320 aa).

Residues 1 to 15 form a necessary for nuclear export region; it reads MDLSAIYESLMSMSH. The segment at 1 to 93 is necessary and sufficient for the association with mRNA decay enzymes and mRNA decay activation; sequence MDLSAIYESL…PTSPTATPTT (93 aa). Necessary for localization of ARE-containing mRNAs to processing bodies (PBs) stretches follow at residues 1-167 and 93-320; these read MDLS…DLAL and TSSR…SVSE. The tract at residues 17–50 is disordered; the sequence is LSPDHGGTESSGGLWNINSSDSIPSGVTSRLTGR. Residues 27 to 50 are compositionally biased toward polar residues; sequence SGGLWNINSSDSIPSGVTSRLTGR. At Ser53 the chain carries Phosphoserine; by MAPKAPK2. Ser59 carries the phosphoserine modification. Residues 64–68 form a P-P-P-P-G repeat; it reads PPPPG. Residues 66–85 show a composition bias toward pro residues; sequence PPGFAPLAPRPGPELSPSPT. A disordered region spans residues 66-95; that stretch reads PPGFAPLAPRPGPELSPSPTSPTATPTTSS. Phosphoserine occurs at positions 81 and 83. Thr85 is modified (phosphothreonine). Ser86 carries the post-translational modification Phosphoserine. Residues 86-95 are compositionally biased toward low complexity; that stretch reads SPTATPTTSS. The interval 88–161 is necessary for nuclear localization; it reads TATPTTSSRY…GSRCHFIHNP (74 aa). Residues 90–166 form a necessary for RNA-binding region; that stretch reads TPTTSSRYKT…FIHNPTEDLA (77 aa). C3H1-type zinc fingers lie at residues 96–124 and 134–162; these read RYKTELCRTYSESGRCRYGAKCQFAHGPG and KYKTELCHKFYLQGRCPYGSRCHFIHNPT. The tract at residues 96-187 is necessary for interaction with PABPN1; the sequence is RYKTELCRTY…ISFSGLPSGR (92 aa). The interval 167 to 320 is necessary for mRNA decay activation; the sequence is LPGQPHVLRQ…PIFNRISVSE (154 aa). Ser179 bears the Phosphoserine; by MAPKAPK2 mark. Residues 180–310 are disordered; the sequence is FSGLPSGRRT…PQPPAPPRRL (131 aa). Residue Ser190 is modified to Phosphoserine. A P-P-P-P-G repeat occupies 191 to 195; the sequence is PPPPG. Residues 197-209 show a composition bias toward low complexity; the sequence is SGPSLSSCSFSPS. Ser211 is modified (phosphoserine). One copy of the P-P-P-P-G repeat lies at 212–216; sequence PPPPG. The residue at position 221 (Ser221) is a Phosphoserine; by MAPK1; in vitro. Residue Thr251 is modified to Phosphothreonine. 2 positions are modified to phosphoserine: Ser270 and Ser290. A compositionally biased stretch (low complexity) spans 280–290; that stretch reads SSGSSLGGSDS. A compositionally biased stretch (pro residues) spans 300-309; the sequence is PPQPPAPPRR. Residues 306–320 are interaction with CNOT1; the sequence is PPRRLPIFNRISVSE. A Phosphoserine modification is found at Ser317.

Associates with cytoplasmic CCR4-NOT and PAN2-PAN3 deadenylase complexes to trigger ARE-containing mRNA deadenylation and decay processes. Part of a mRNA decay activation complex at least composed of poly(A)-specific exoribonucleases CNOT6, EXOSC2 and XRN1 and mRNA-decapping enzymes DCP1A and DCP2. Associates with the RNA exosome complex. Interacts (via phosphorylated form) with 14-3-3 proteins; these interactions promote exclusion of ZFP36 from cytoplasmic stress granules in response to arsenite treatment in a MAPKAPK2-dependent manner and does not prevent CCR4-NOT deadenylase complex recruitment or ZFP36-induced ARE-containing mRNA deadenylation and decay processes. Interacts with 14-3-3 proteins; these interactions occur in response to rapamycin in an Akt-dependent manner. Interacts with AGO2 and AGO4. Interacts (via C-terminus) with CNOT1; this interaction occurs in a RNA-independent manner and induces mRNA deadenylation. Interacts (via N-terminus) with CNOT6. Interacts with CNOT6L. Interacts (via C-terminus) with CNOT7; this interaction occurs in a RNA-independent manner, induces mRNA deadenylation and is inhibited in a phosphorylation MAPKAPK2-dependent manner. Interacts (via unphosphorylated form) with CNOT8; this interaction occurs in a RNA-independent manner and is inhibited in a phosphorylation MAPKAPK2-dependent manner. Interacts with DCP1A. Interacts (via N-terminus) with DCP2. Interacts with EDC3. Interacts (via N-terminus) with EXOSC2. Interacts with heat shock 70 kDa proteins. Interacts with KHSRP; this interaction increases upon cytokine-induced treatment. Interacts with MAP3K4; this interaction enhances the association with SH3KBP1/CIN85. Interacts with MAPKAPK2; this interaction occurs upon skeletal muscle satellite cell activation. Interacts with NCL. Interacts with NUP214; this interaction increases upon lipopolysaccharide (LPS) stimulation. Interacts with PABPC1; this interaction occurs in a RNA-dependent manner. Interacts (via hypophosphorylated form) with PABPN1 (via RRM domain and C-terminal arginine-rich region); this interaction occurs in the nucleus in a RNA-independent manner, decreases in presence of single-stranded poly(A) RNA-oligomer and in a p38 MAPK-dependent-manner and inhibits nuclear poly(A) tail synthesis. Interacts with PAN2. Interacts (via C3H1-type zinc finger domains) with PKM. Interacts (via C3H1-type zinc finger domains) with nuclear RNA poly(A) polymerase. Interacts with PPP2CA; this interaction occurs in LPS-stimulated cells and induces ZFP36 dephosphorylation, and hence may promote ARE-containing mRNAs decay. Interacts (via C-terminus) with PRR5L (via C-terminus); this interaction may accelerate ZFP36-mediated mRNA decay during stress. Interacts (via C-terminus) with SFN; this interaction occurs in a phosphorylation-dependent manner. Interacts (via extreme C-terminal region) with SH3KBP1/CIN85 (via SH3 domains); this interaction enhances MAP3K4-induced phosphorylation of ZFP36 at Ser-59 and Ser-86 and does not alter neither ZFP36 binding to ARE-containing transcripts nor TNF-alpha mRNA decay. Interacts with XRN1. Interacts (via C-terminus and Ser-179 phosphorylated form) with YWHAB; this interaction occurs in a p38/MAPKAPK2-dependent manner, increases cytoplasmic localization of ZFP36 and protects ZFP36 from Ser-179 dephosphorylation by serine/threonine phosphatase 2A, and hence may be crucial for stabilizing ARE-containing mRNAs. Interacts (via phosphorylated form) with YWHAE. Interacts (via C-terminus) with YWHAG; this interaction occurs in a phosphorylation-dependent manner. Interacts with YWHAH; this interaction occurs in a phosphorylation-dependent manner. Interacts with YWHAQ; this interaction occurs in a phosphorylation-dependent manner. Interacts with (via C-terminus) YWHAZ; this interaction occurs in a phosphorylation-dependent manner. Does not interact with SH3KBP1. Interacts (via P-P-P-P-G repeats) with GIGYF2; the interaction is direct. Phosphorylated. Phosphorylation at serine and/or threonine residues occurs in a p38 MAPK- and MAPKAPK2-dependent manner. Phosphorylated by MAPKAPK2 at Ser-53 and Ser-179; phosphorylation increases its stability and cytoplasmic localization, promotes binding to 14-3-3 adapter proteins and inhibits the recruitment of cytoplasmic CCR4-NOT and PAN2-PAN3 deadenylase complexes to the mRNA decay machinery, thereby inhibiting ZFP36-induced ARE-containing mRNA deadenylation and decay processes. Phosphorylation by MAPKAPK2 does not impair ARE-containing RNA-binding. Phosphorylated in a MAPKAPK2- and p38 MAPK-dependent manner upon skeletal muscle satellite cell activation; this phosphorylation inhibits ZFP36-mediated mRNA decay activity, and hence stabilizes MYOD1 mRNA. Phosphorylated by MAPK1 upon mitogen stimulation. Phosphorylated at Ser-59 and Ser-86; these phosphorylations increase in a SH3KBP1-dependent manner. Phosphorylated at serine and threonine residues in a pyruvate kinase PKM- and p38 MAPK-dependent manner. Phosphorylation at Ser-53 may participate in the PKM-mediated degradation of ZFP36 in a p38 MAPK-dependent manner. Dephosphorylated by serine/threonine phosphatase 2A at Ser-179. In terms of processing, ubiquitinated; pyruvate kinase (PKM)-dependent ubiquitination leads to proteasomal degradation through a p38 MAPK signaling pathway.

The protein localises to the nucleus. It localises to the cytoplasm. The protein resides in the cytoplasmic granule. It is found in the P-body. Zinc-finger RNA-binding protein that destabilizes numerous cytoplasmic AU-rich element (ARE)-containing mRNA transcripts by promoting their poly(A) tail removal or deadenylation, and hence provide a mechanism for attenuating protein synthesis. Acts as an 3'-untranslated region (UTR) ARE mRNA-binding adapter protein to communicate signaling events to the mRNA decay machinery. Recruits deadenylase CNOT7 (and probably the CCR4-NOT complex) via association with CNOT1, and hence promotes ARE-mediated mRNA deadenylation. Also functions by recruiting components of the cytoplasmic RNA decay machinery to the bound ARE-containing mRNAs. Self regulates by destabilizing its own mRNA. Binds to 3'-UTR ARE of numerous mRNAs. Also binds to ARE of its own mRNA. Plays a role in anti-inflammatory responses; suppresses tumor necrosis factor (TNF)-alpha production by stimulating ARE-mediated TNF-alpha mRNA decay and several other inflammatory ARE-containing mRNAs in interferon (IFN)- and/or lipopolysaccharide (LPS)-induced macrophages. Also plays a role in the regulation of dendritic cell maturation at the post-transcriptional level, and hence operates as part of a negative feedback loop to limit the inflammatory response. Promotes ARE-mediated mRNA decay of hypoxia-inducible factor HIF1A mRNA during the response of endothelial cells to hypoxia. Positively regulates early adipogenesis of preadipocytes by promoting ARE-mediated mRNA decay of immediate early genes (IEGs). Negatively regulates hematopoietic/erythroid cell differentiation by promoting ARE-mediated mRNA decay of the transcription factor STAT5B mRNA. Plays a role in maintaining skeletal muscle satellite cell quiescence by promoting ARE-mediated mRNA decay of the myogenic determination factor MYOD1 mRNA. Also associates with and regulates the expression of non-ARE-containing target mRNAs at the post-transcriptional level, such as MHC class I mRNAs. Participates in association with argonaute RISC catalytic components in the ARE-mediated mRNA decay mechanism; assists microRNA (miRNA) targeting ARE-containing mRNAs. May also play a role in the regulation of cytoplasmic mRNA decapping; enhances decapping of ARE-containing RNAs, in vitro. Involved in the delivery of target ARE-mRNAs to processing bodies (PBs). In addition to its cytosolic mRNA-decay function, affects nuclear pre-mRNA processing. Negatively regulates nuclear poly(A)-binding protein PABPN1-stimulated polyadenylation activity on ARE-containing pre-mRNA during LPS-stimulated macrophages. Also involved in the regulation of stress granule (SG) and P-body (PB) formation and fusion. Plays a role in the regulation of keratinocyte proliferation, differentiation and apoptosis. Plays a role as a tumor suppressor by inhibiting cell proliferation in breast cancer cells. The chain is mRNA decay activator protein ZFP36 from Rattus norvegicus (Rat).